Reading from the N-terminus, the 559-residue chain is MNKLRSSAITQGVQRSPNRSMLRAVGFSDDDFTKPIIGVANGYSTITPCNMGLNKLALKAEDSIRKSGGMPQMFGTITVSDGISMGTEGMKYSLVSREVIADSIETACNAQSMDGVLAIGGCDKNMPGAMIAIARMNIPSIFIYGGTIKPGKLNGEDLTVVSAFEAVGQLTSGKINEKRLNEVEKNCIPGAGSCGGMFTANTMSAVIEVLGLSLPHSSTMAAEDYEKVVSAEKSAEILVDAIKKDIRPLDLMTKESFENAISVIMAIGGSTNAVLHILAIANTAGIEINIDDFERIRQKVPVICDLKPSGRYVTVDLHNAGGIPQVMKILLNAGLINGDCKNIEGKTISEYLLNIPDNPPENQNVIRNINNPLYKKGHLAILKGNLASEGCVAKISGVKNPVLKGPARIFESEEDCLKSILNNDIKAGNVVVIRNEGPVGGPGMREMLAPTSAIVGQGLGEKVALITDGRFSGGTYGLVVGHIAPEAAVGGNIALIREGDLITVDAVNQLIEVELSDGELEKRRINWIKPIPKYKKGVLSKYSRIVSTSSLGAVTDLEK.

Cys49 lines the [2Fe-2S] cluster pocket. Residue Asp81 coordinates Mg(2+). Cys122 contacts [2Fe-2S] cluster. 2 residues coordinate Mg(2+): Asp123 and Lys124. Lys124 carries the N6-carboxylysine modification. Cys194 lines the [2Fe-2S] cluster pocket. Glu446 contacts Mg(2+). The active-site Proton acceptor is the Ser472.

Belongs to the IlvD/Edd family. Homodimer. [2Fe-2S] cluster is required as a cofactor. Mg(2+) serves as cofactor.

The catalysed reaction is (2R)-2,3-dihydroxy-3-methylbutanoate = 3-methyl-2-oxobutanoate + H2O. It carries out the reaction (2R,3R)-2,3-dihydroxy-3-methylpentanoate = (S)-3-methyl-2-oxopentanoate + H2O. It functions in the pathway amino-acid biosynthesis; L-isoleucine biosynthesis; L-isoleucine from 2-oxobutanoate: step 3/4. It participates in amino-acid biosynthesis; L-valine biosynthesis; L-valine from pyruvate: step 3/4. Functions in the biosynthesis of branched-chain amino acids. Catalyzes the dehydration of (2R,3R)-2,3-dihydroxy-3-methylpentanoate (2,3-dihydroxy-3-methylvalerate) into 2-oxo-3-methylpentanoate (2-oxo-3-methylvalerate) and of (2R)-2,3-dihydroxy-3-methylbutanoate (2,3-dihydroxyisovalerate) into 2-oxo-3-methylbutanoate (2-oxoisovalerate), the penultimate precursor to L-isoleucine and L-valine, respectively. In Prochlorococcus marinus (strain MIT 9515), this protein is Dihydroxy-acid dehydratase.